Here is a 429-residue protein sequence, read N- to C-terminus: Ribosomal RNA small subunit methyltransferase B (429 aa).

Residues 254 to 260 (CAAPGGK), Asp-277, Asp-303, and Asp-322 each bind S-adenosyl-L-methionine. The Nucleophile role is filled by Cys-375. The segment at 397–419 (ALSETGTPDQPGQQNLPGGEEGD) is disordered. The span at 400–412 (ETGTPDQPGQQNL) shows a compositional bias: polar residues.

It belongs to the class I-like SAM-binding methyltransferase superfamily. RsmB/NOP family.

The protein resides in the cytoplasm. The catalysed reaction is cytidine(967) in 16S rRNA + S-adenosyl-L-methionine = 5-methylcytidine(967) in 16S rRNA + S-adenosyl-L-homocysteine + H(+). Its function is as follows. Specifically methylates the cytosine at position 967 (m5C967) of 16S rRNA. This Salmonella choleraesuis (strain SC-B67) protein is Ribosomal RNA small subunit methyltransferase B.